Here is a 116-residue protein sequence, read N- to C-terminus: Omega-ctenitoxin-Pn3a (116 aa).

A signal peptide spans 1–19; sequence MKMKLLGIILLVSFPFVLG. Residues 20–38 constitute a propeptide that is removed on maturation; sequence FAGIPIEEGENSVEVGEVE. Disulfide bonds link cysteine 41-cysteine 58, cysteine 48-cysteine 64, cysteine 55-cysteine 90, cysteine 57-cysteine 78, cysteine 66-cysteine 76, cysteine 96-cysteine 102, and cysteine 106-cysteine 111. Histidine 115 carries the histidine amide modification.

It belongs to the neurotoxin 04 (omega-agtx) family. 03 (type II/III omega-agtx) subfamily. In terms of tissue distribution, expressed by the venom gland.

It localises to the secreted. Its function is as follows. This toxin is a potent and practically irreversible antagonist of both Cav2.1/CACNA1A and Cav2.2/CACNA1B calcium channels, while it displays a partial and rapidly reversible block of Cav2.3/CACNA1E calcium channels and no effect on Cav3/CACNA1 calcium channels. Inhibits glutamate uptake from rat brain synaptosomes by an interaction between cysteines from both glutamate transporter and toxin. Blocks potassium-induced exocytosis of synaptic vesicles in brain cortical synaptosomes (IC(50)=1.1 nM). In rat brain, inhibits glutamate release, neuronal death and loss of neurotransmission in the hippocampus resulting from ischemia. In vivo, induces rapid general flaccid paralysis followed by death in 10-30 minutes at dose levels of 5 ug per mouse. In Phoneutria nigriventer (Brazilian armed spider), this protein is Omega-ctenitoxin-Pn3a.